Reading from the N-terminus, the 242-residue chain is Lectin-like protein At1g53060 (242 aa).

The segment at 3–237 (FHGDAEYASE…RHEILDWSFE (235 aa)) is legume-lectin like. A Phosphoserine modification is found at Ser207.

The protein belongs to the leguminous lectin family.

The chain is Lectin-like protein At1g53060 from Arabidopsis thaliana (Mouse-ear cress).